A 259-amino-acid chain; its full sequence is Ubiquitin-conjugating enzyme E2 J2 (259 aa).

The Cytoplasmic portion of the chain corresponds to 1–226 (MSSNSVKRAP…AGLQQANRHH (226 aa)). The 151-residue stretch at 12-162 (TATQRLKQDY…DKVFCELFPE (151 aa)) folds into the UBC core domain. Cysteine 94 (glycyl thioester intermediate) is an active-site residue. The interval 174–200 (QDELSSRPQALPLPDVVPDGETHHGQH) is disordered. A helical; Anchor for type IV membrane protein transmembrane segment spans residues 227-247 (GLLGGALANLFVIVGFAAFAY). The Lumenal segment spans residues 248–259 (TVKYVLRSIAQE).

Belongs to the ubiquitin-conjugating enzyme family.

The protein resides in the endoplasmic reticulum membrane. It carries out the reaction S-ubiquitinyl-[E1 ubiquitin-activating enzyme]-L-cysteine + [E2 ubiquitin-conjugating enzyme]-L-cysteine = [E1 ubiquitin-activating enzyme]-L-cysteine + S-ubiquitinyl-[E2 ubiquitin-conjugating enzyme]-L-cysteine.. The protein operates within protein modification; protein ubiquitination. Its function is as follows. Catalyzes the covalent attachment of ubiquitin to other proteins. Seems to function in the selective degradation of misfolded membrane proteins from the endoplasmic reticulum (ERAD). In cooperation with the GATOR2 complex, catalyzes 'Lys-6'-linked ubiquitination of NPRL2. This Bos taurus (Bovine) protein is Ubiquitin-conjugating enzyme E2 J2 (UBE2J2).